The sequence spans 282 residues: Biotin synthase (282 aa).

A Radical SAM core domain is found at Met1–Arg228. Residues Cys17, Cys21, and Cys24 each contribute to the [4Fe-4S] cluster site. The [2Fe-2S] cluster site is built by Cys61, Cys96, Cys154, and Arg221.

This sequence belongs to the radical SAM superfamily. Biotin synthase family. Homodimer. [4Fe-4S] cluster serves as cofactor. Requires [2Fe-2S] cluster as cofactor.

It catalyses the reaction (4R,5S)-dethiobiotin + (sulfur carrier)-SH + 2 reduced [2Fe-2S]-[ferredoxin] + 2 S-adenosyl-L-methionine = (sulfur carrier)-H + biotin + 2 5'-deoxyadenosine + 2 L-methionine + 2 oxidized [2Fe-2S]-[ferredoxin]. Its pathway is cofactor biosynthesis; biotin biosynthesis; biotin from 7,8-diaminononanoate: step 2/2. Catalyzes the conversion of dethiobiotin (DTB) to biotin by the insertion of a sulfur atom into dethiobiotin via a radical-based mechanism. The polypeptide is Biotin synthase (Helicobacter pylori (strain HPAG1)).